Here is a 160-residue protein sequence, read N- to C-terminus: Transcription antitermination protein NusB (160 aa).

This sequence belongs to the NusB family.

Functionally, involved in transcription antitermination. Required for transcription of ribosomal RNA (rRNA) genes. Binds specifically to the boxA antiterminator sequence of the ribosomal RNA (rrn) operons. This Mycolicibacterium smegmatis (strain ATCC 700084 / mc(2)155) (Mycobacterium smegmatis) protein is Transcription antitermination protein NusB.